A 356-amino-acid chain; its full sequence is uncharacterized protein (356 aa).

Residues isoleucine 8–serine 28 form a helical membrane-spanning segment.

It to C.elegans C41C4.1 and C18B2.1.

The protein resides in the membrane. This is an uncharacterized protein from Caenorhabditis elegans.